We begin with the raw amino-acid sequence, 383 residues long: Dynein axonemal assembly factor 11 (383 aa).

LRR repeat units follow at residues 20 to 45 (LSNLKEVALHQQDIERIELIGDACRE), 46 to 66 (LEILYLCNNYISRIEGLQHLK), 67 to 89 (YLKYLNLAVNNITYIEGLEGCEA), and 90 to 110 (LERLDLTLNFVADVTCVERLR). The region spanning 128 to 146 (VAGYRAYVVHALPQLRELD) is the LRRCT domain. A disordered region spans residues 201–244 (KGERLYGHTPEERLQMLREKEEEERRKREEQRERERSSQFGAIR). Residues 211–239 (EERLQMLREKEEEERRKREEQRERERSSQ) adopt a coiled-coil conformation.

Belongs to the tilB family.

It is found in the cytoplasm. The protein resides in the cytoskeleton. It localises to the flagellum basal body. Functionally, involved in the regulation of the cell cycle; is required for the basal body replication and new flagellum biogenesis. In Trypanosoma brucei brucei, this protein is Dynein axonemal assembly factor 11 (dnaaf11).